Here is a 766-residue protein sequence, read N- to C-terminus: Protein sak1 (766 aa).

Residues 101–176 constitute a DNA-binding region (RFX-type winged-helix); that stretch reads GICWLKRACE…YHYCGIKLRG (76 aa). 3 positions are modified to phosphoserine: Ser-223, Ser-224, and Ser-227. Disordered stretches follow at residues 271-308 and 708-731; these read PQAH…QPTY and LQEH…QQQQ. Residues 279–289 are compositionally biased toward polar residues; that stretch reads HLSQSNVPPQL. Low complexity-rich tracts occupy residues 290 to 308 and 715 to 731; these read SHSS…QPTY and QQHF…QQQQ.

Belongs to the RFX family.

Its subcellular location is the nucleus. Functionally, positively regulates cyclic AMP-dependent protein kinase-mediated exit from the mitotic cell cycle. The chain is Protein sak1 (sak1) from Schizosaccharomyces pombe (strain 972 / ATCC 24843) (Fission yeast).